The primary structure comprises 203 residues: Small ribosomal subunit protein uS2 (203 aa).

The protein belongs to the universal ribosomal protein uS2 family.

The chain is Small ribosomal subunit protein uS2 from Methanoregula boonei (strain DSM 21154 / JCM 14090 / 6A8).